A 91-amino-acid chain; its full sequence is Small ribosomal subunit protein uS19 (91 aa).

This sequence belongs to the universal ribosomal protein uS19 family.

Its function is as follows. Protein S19 forms a complex with S13 that binds strongly to the 16S ribosomal RNA. The protein is Small ribosomal subunit protein uS19 of Prochlorococcus marinus (strain SARG / CCMP1375 / SS120).